Consider the following 1863-residue polypeptide: Breast cancer type 1 susceptibility protein (1863 aa).

At M1 the chain carries N-acetylmethionine. The RING-type zinc-finger motif lies at 24-65; sequence CPICLELIKEPVSTKCDHIFCKFCMLKLLNQKKGPSQCPLCK. K109 participates in a covalent cross-link: Glycyl lysine isopeptide (Lys-Gly) (interchain with G-Cter in SUMO2). S114 is modified (phosphoserine). The interval 230–270 is disordered; the sequence is ETDVTNTEHHQPSNNDLNTTEKRAAERHPEKYQGSSVSNLH. Residues 248–260 are compositionally biased toward basic and acidic residues; it reads TTEKRAAERHPEK. A Glycyl lysine isopeptide (Lys-Gly) (interchain with G-Cter in SUMO2) cross-link involves residue K301. The tract at residues 306-338 is disordered; it reads NKSKQPGLARSQHNRWAGSKETCNDRRTPSTEK. Residues 327-338 are compositionally biased toward basic and acidic residues; sequence TCNDRRTPSTEK. K339 participates in a covalent cross-link: Glycyl lysine isopeptide (Lys-Gly) (interchain with G-Cter in SUMO2). A phosphoserine mark is found at S395, S398, S423, and S434. Residues K443, K459, and K519 each participate in a glycyl lysine isopeptide (Lys-Gly) (interchain with G-Cter in SUMO2) cross-link. The span at 534 to 544 shows a compositional bias: low complexity; that stretch reads QGTNQTEQNGQ. The interval 534–570 is disordered; the sequence is QGTNQTEQNGQVMNITNSGHENKTKGDSIQNEKNPNP. Phosphoserine is present on S551. Glycyl lysine isopeptide (Lys-Gly) (interchain with G-Cter in SUMO2) cross-links involve residues K583 and K654. Residues 654–709 form a disordered region; that stretch reads KYNQMPVRHSRNLQLMEGKEPATGAKKSNKPNEQTSKRHDSDTFPELKLTNAPGSF. Residues S694, S708, and S725 each carry the phosphoserine modification. Glycyl lysine isopeptide (Lys-Gly) (interchain with G-Cter in SUMO2) cross-links involve residues K734 and K739. Phosphoserine occurs at positions 753 and 840. Glycyl lysine isopeptide (Lys-Gly) (interchain with G-Cter in SUMO2) cross-links involve residues K918 and K987. Position 988 is a phosphoserine; by CHEK2 (S988). S1009 is subject to Phosphoserine. K1079 is covalently cross-linked (Glycyl lysine isopeptide (Lys-Gly) (interchain with G-Cter in SUMO2)). S1143 bears the Phosphoserine; by ATR; in vitro mark. The segment at 1181 to 1216 is disordered; it reads VQKGELSRSPSPFTHTHLAQGYRRGAKKLESSEENL. Phosphoserine is present on residues S1189, S1191, S1211, S1217, and S1218. S1280 carries the post-translational modification Phosphoserine; by ATR; in vitro. Residues 1322–1387 are disordered; it reads KQMRHQSESQ…VSEDCSGLSS (66 aa). Residues S1328, S1336, and S1342 each carry the phosphoserine modification. A compositionally biased stretch (polar residues) spans 1373 to 1387; the sequence is ESETSVSEDCSGLSS. S1387 carries the phosphoserine; by ATM and ATR modification. T1394 bears the Phosphothreonine; by ATR; in vitro mark. The interval 1397–1424 is interaction with PALB2; that stretch reads RDTMQHNLIKLQQEMAELEAVLEQHGSQ. The residue at position 1423 (S1423) is a Phosphoserine; by ATM and ATR. The disordered stretch occupies residues 1440-1505; that stretch reads EDLRNPEQST…SSPSKCPSLD (66 aa). Residues 1445 to 1470 are compositionally biased toward polar residues; the sequence is PEQSTSEKAVLTSQKSSEYPISQNPE. Position 1457 is a phosphoserine; by ATR; in vitro (S1457). S1524 carries the phosphoserine; by ATM modification. S1542 carries the post-translational modification Phosphoserine. The tract at residues 1565 to 1596 is disordered; that stretch reads ESGISLFSDDPESDPSEDRAPESARVGNIPSS. BRCT domains lie at 1642–1736 and 1756–1855; these read STER…DFEV and QDRK…TYLI.

In terms of assembly, heterodimer with BARD1. Part of the BRCA1-associated genome surveillance complex (BASC), which contains BRCA1, MSH2, MSH6, MLH1, ATM, BLM, PMS2 and the MRE11-RAD50-NBN protein (MRN) complex. This association could be a dynamic process changing throughout the cell cycle and within subnuclear domains. Component of the BRCA1-A complex, at least composed of BRCA1, BARD1, UIMC1/RAP80, ABRAXAS1, BRCC3/BRCC36, BABAM2 and BABAM1/NBA1. Interacts (via the BRCT domains) with ABRAXAS1 (phosphorylated form); this is important for recruitment to sites of DNA damage. Can form a heterotetramer with two molecules of ABRAXAS1 (phosphorylated form). Component of the BRCA1-RBBP8 complex. Interacts (via the BRCT domains) with RBBP8 ('Ser-327' phosphorylated form); the interaction ubiquitinates RBBP8, regulates CHEK1 activation, and involves RBBP8 in BRCA1-dependent G2/M checkpoint control on DNA damage. Associates with RNA polymerase II holoenzyme. Interacts with SMC1A, NELFB, DCLRE1C, CLSPN. Interacts with CHEK1, CHEK2, BAP1, BRCC3, UBXN1 and PCLAF. Interacts (via BRCT domains) with BRIP1 (phosphorylated form). Interacts with FANCD2 (ubiquitinated form). Interacts with H2AX (phosphorylated on 'Ser-140'). Interacts (via the BRCT domains) with ACACA (phosphorylated form); the interaction prevents dephosphorylation of ACACA. Part of a BRCA complex containing BRCA1, BRCA2 and PALB2. Interacts directly with PALB2; the interaction is essential for its function in HRR. Interacts directly with BRCA2; the interaction occurs only in the presence of PALB2 which serves as the bridging protein. Interacts (via the BRCT domains) with LMO4; the interaction represses the transcriptional activity of BRCA1. Interacts (via the BRCT domains) with CCAR2 (via N-terminus); the interaction represses the transcriptional activator activity of BRCA1. Interacts with EXD2. Interacts (via C-terminus) with DHX9; this interaction is direct and links BRCA1 to the RNA polymerase II holoenzyme. Interacts with DNA helicase ZGRF1; the interaction is increased following DNA damage induction. In terms of processing, phosphorylated in response to IR, UV, and various stimuli that cause checkpoint activation, probably by ATM or ATR. Phosphorylation at Ser-988 by CHEK2 regulates mitotic spindle assembly. Phosphorylation by AURKA regulates centrosomal microtubule nucleation. Post-translationally, autoubiquitinated, undergoes 'Lys-6'-linked polyubiquitination. 'Lys-6'-linked polyubiquitination does not promote degradation. Isoform 1 and isoform 3 are widely expressed. Isoform 3 is reduced or absent in several breast and ovarian cancer cell lines.

Its subcellular location is the nucleus. It localises to the chromosome. It is found in the cytoplasm. The enzyme catalyses S-ubiquitinyl-[E2 ubiquitin-conjugating enzyme]-L-cysteine + [acceptor protein]-L-lysine = [E2 ubiquitin-conjugating enzyme]-L-cysteine + N(6)-ubiquitinyl-[acceptor protein]-L-lysine.. It functions in the pathway protein modification; protein ubiquitination. With respect to regulation, the E3 ubiquitin-protein ligase activity is inhibited by phosphorylation by AURKA. Activity is increased by phosphatase treatment. Its function is as follows. E3 ubiquitin-protein ligase that specifically mediates the formation of 'Lys-6'-linked polyubiquitin chains and plays a central role in DNA repair by facilitating cellular responses to DNA damage. It is unclear whether it also mediates the formation of other types of polyubiquitin chains. The BRCA1-BARD1 heterodimer coordinates a diverse range of cellular pathways such as DNA damage repair, ubiquitination and transcriptional regulation to maintain genomic stability. Regulates centrosomal microtubule nucleation. Required for appropriate cell cycle arrests after ionizing irradiation in both the S-phase and the G2 phase of the cell cycle. Required for FANCD2 targeting to sites of DNA damage. Inhibits lipid synthesis by binding to inactive phosphorylated ACACA and preventing its dephosphorylation. Contributes to homologous recombination repair (HRR) via its direct interaction with PALB2, fine-tunes recombinational repair partly through its modulatory role in the PALB2-dependent loading of BRCA2-RAD51 repair machinery at DNA breaks. Component of the BRCA1-RBBP8 complex which regulates CHEK1 activation and controls cell cycle G2/M checkpoints on DNA damage via BRCA1-mediated ubiquitination of RBBP8. Acts as a transcriptional activator. The protein is Breast cancer type 1 susceptibility protein (BRCA1) of Homo sapiens (Human).